Reading from the N-terminus, the 95-residue chain is FXYD domain-containing ion transport regulator 6 (95 aa).

An N-terminal signal peptide occupies residues 1 to 18 (MELVLVFLCSLLAPMVLA). Topologically, residues 19 to 35 (SAAEKEKEMDPFHYDYQ) are extracellular. The helical transmembrane segment at 36 to 57 (TLRIGGLVFAVVLFSVGILLIL) threads the bilayer. The Cytoplasmic portion of the chain corresponds to 58 to 95 (SRRCKCSFNQKPRAPGDEEAQVENLITANATEPQKAEN). The interval 69–95 (PRAPGDEEAQVENLITANATEPQKAEN) is disordered.

It belongs to the FXYD family. In terms of assembly, regulatory subunit of the sodium/potassium-transporting ATPase which is composed of a catalytic alpha subunit, a non-catalytic beta subunit and an additional regulatory subunit. The regulatory subunit, a member of the FXYD protein family, modulates the enzymatic activity in a tissue- and isoform-specific way by changing affinities of the Na+/K+-ATPase toward Na(+), K(+) or ATP.

It localises to the cell membrane. Functionally, associates with and regulates the activity of the sodium/potassium-transporting ATPase (NKA) which catalyzes the hydrolysis of ATP coupled with the exchange of Na(+) and K(+) ions across the plasma membrane. Reduces the apparent affinity for intracellular Na(+) with no change in the apparent affinity for extracellular K(+). In addition to modulating NKA kinetics, may also function as a regulator of NKA localization to the plasma membrane. This Homo sapiens (Human) protein is FXYD domain-containing ion transport regulator 6.